A 1038-amino-acid chain; its full sequence is MGLIKKVTHWSYDNLIDYLSVNPTRDEVTHYKVDPENESDESIIKLHTVKDFGSITCLDYSESEIGMIGVGEKNGYLRIFNISGQNSSSPASHAPVGLNANNETSMTNASGGKAAQAENIVGSVSNLKDTQGYPVSETNYDIRVRAKKQRCINSLGINTNGLIAMGLDRNKHDSSLQIWDMNYHDDSHETINPMFSYCTNESIVSLKFLNDTSVLAASTKFLKEIDVRSPNPIYQHPTRLTYDIKLNPFNDWQFSTYGDDGTLAIWDRRKLSDQASLGDLNVASPLLTFEKLVGSGAASRKYMNSCFRWSCVRNNEFATLHRGDTIKRWRLGYYCDSNRDIAADDDNEMNIENLFVSSVHDTNTMYDRVATFDYIPRSNNGTSLICMRQSGTIYRMPISEVCSKAILNNRNSLLLSNFENTEIDEIRVNNEHEKSNLENVKTILKNLSFEDLDVSEDYFPSGHDEPNNEIEYSELSEEENEGSNDVLDSKRGFELFWKPEKLLEKDISVIMRTRASLGYGLDPMNTVEMIDSSKNLQNNAYIRNTWRWIAIAKASVDDGTMVSGDLDLGYEGVIGIWNGINGISNQDRYRQETILSDKQLNKEMEKIIKLRRKNRDRNSPIANAAGSPKYVQRRLCLIISGWDLSRSDYEDKYNIIMKNGHYEKAAAWAVFFGDIPKAVEILGSAKKERLRLIATAIAGYLAYKDLPGNNAWRQQCRKMSSELDDPYLRVIFAFIADNDWWDILYEPAISLRERLGVALRFLNDTDLTTFLDRTSSTVIENGELEGLILTGITPNGIDLLQSYVNKTSDVQSAALISIFGSPRYFRDQRVDEWIQTYRDMLKSWELFSMRARFDVLRSKLSRTKTGVLTADIKPRQIYIQCQNCKQNINTPRTSSPSSAVSTSAGNYKNGEAYRRNNADYKKFNTGSSEAQAADEKPRHKYCCPHCGSSFPRCAICLMPLGTSNLPFVINGTQSRDPMQTEDSQDGANRELVSRKLKLNEWFSFCLSCNHGMHAGHAEEWFDRHNVCPTPGCTCQCNK.

Residues 50–90 (KDFGSITCLDYSESEIGMIGVGEKNGYLRIFNISGQNSSSP) form a WD 1 repeat. A phosphoserine mark is found at S123 and S136. WD repeat units follow at residues 147-189 (KKQR…DSHE), 235-276 (QHPT…DQAS), and 544-587 (NTWR…SNQD).

Belongs to the WD repeat mio family. Component of the SEA complex composed of at least IML1/SEA1, RTC1/SEA2, MTC5/SEA3, NPR2, NPR3, SEA4, SEC13 and SEH1.

It is found in the cytoplasm. The protein resides in the vacuole membrane. Functionally, component of the SEA complex which coats the vacuolar membrane and is involved in intracellular trafficking, autophagy, response to nitrogen starvation, and amino acid biogenesis. The protein is SEH-associated protein 4 (SEA4) of Saccharomyces cerevisiae (strain ATCC 204508 / S288c) (Baker's yeast).